An 827-amino-acid polypeptide reads, in one-letter code: uncharacterized protein (827 aa).

Residues 12-82 (FDADFEAILN…DMDIGVLSTG (71 aa)) form the PAS 1 domain. Residues 212 to 264 (LDVEFRLAAAEGGYSWYRSRAATRRAEDGSILRWYGTVEDIDDRRKMFEALKE) enclose the PAC 1 domain. The PAS 2 domain maps to 265-335 (SEARFRAIAD…RVFYQAFDLR (71 aa)). Residues 338–390 (VRMEYRLKRAGGGSAWVIDIGQPRFASDGTFLGFVGIALDITERRNAEQERLL) form the PAC 2 domain. The GGDEF domain occupies 428–561 (TRLAILCLDL…GGGTIVQYEP (134 aa)). An EAL domain is found at 570–820 (RQRMKVSLRH…QAMALLKSRS (251 aa)).

This is an uncharacterized protein from Sinorhizobium fredii (strain NBRC 101917 / NGR234).